The chain runs to 363 residues: S-adenosylmethionine decarboxylase proenzyme (363 aa).

Catalysis depends on residues glutamate 9 and glutamate 12. The Schiff-base intermediate with substrate; via pyruvic acid role is filled by serine 69. Serine 69 is modified (pyruvic acid (Ser); by autocatalysis). Cysteine 83 acts as the Proton donor; for catalytic activity in catalysis. Catalysis depends on proton acceptor; for processing activity residues serine 232 and histidine 245.

Belongs to the eukaryotic AdoMetDC family. The cofactor is pyruvate. Is synthesized initially as an inactive proenzyme. Formation of the active enzyme involves a self-maturation process in which the active site pyruvoyl group is generated from an internal serine residue via an autocatalytic post-translational modification. Two non-identical subunits are generated from the proenzyme in this reaction, and the pyruvate is formed at the N-terminus of the alpha chain, which is derived from the carboxyl end of the proenzyme. The post-translation cleavage follows an unusual pathway, termed non-hydrolytic serinolysis, in which the side chain hydroxyl group of the serine supplies its oxygen atom to form the C-terminus of the beta chain, while the remainder of the serine residue undergoes an oxidative deamination to produce ammonia and the pyruvoyl group blocking the N-terminus of the alpha chain.

The enzyme catalyses S-adenosyl-L-methionine + H(+) = S-adenosyl 3-(methylsulfanyl)propylamine + CO2. It participates in amine and polyamine biosynthesis; S-adenosylmethioninamine biosynthesis; S-adenosylmethioninamine from S-adenosyl-L-methionine: step 1/1. This is S-adenosylmethionine decarboxylase proenzyme (SAMDC) from Spinacia oleracea (Spinach).